Reading from the N-terminus, the 113-residue chain is Putative membrane protein insertion efficiency factor (113 aa).

Belongs to the UPF0161 family.

The protein localises to the cell inner membrane. Its function is as follows. Could be involved in insertion of integral membrane proteins into the membrane. This is Putative membrane protein insertion efficiency factor from Campylobacter jejuni subsp. jejuni serotype O:2 (strain ATCC 700819 / NCTC 11168).